The following is a 105-amino-acid chain: Large ribosomal subunit protein uL24 (105 aa).

The protein belongs to the universal ribosomal protein uL24 family. As to quaternary structure, part of the 50S ribosomal subunit.

One of two assembly initiator proteins, it binds directly to the 5'-end of the 23S rRNA, where it nucleates assembly of the 50S subunit. Its function is as follows. One of the proteins that surrounds the polypeptide exit tunnel on the outside of the subunit. This is Large ribosomal subunit protein uL24 from Staphylococcus carnosus (strain TM300).